Here is a 79-residue protein sequence, read N- to C-terminus: ATP synthase subunit c (79 aa).

2 consecutive transmembrane segments (helical) span residues 11-31 (ISAA…IGIL) and 55-75 (IVMG…LYLI).

It belongs to the ATPase C chain family. F-type ATPases have 2 components, F(1) - the catalytic core - and F(0) - the membrane proton channel. F(1) has five subunits: alpha(3), beta(3), gamma(1), delta(1), epsilon(1). F(0) has three main subunits: a(1), b(2) and c(10-14). The alpha and beta chains form an alternating ring which encloses part of the gamma chain. F(1) is attached to F(0) by a central stalk formed by the gamma and epsilon chains, while a peripheral stalk is formed by the delta and b chains.

The protein resides in the cell membrane. Functionally, f(1)F(0) ATP synthase produces ATP from ADP in the presence of a proton or sodium gradient. F-type ATPases consist of two structural domains, F(1) containing the extramembraneous catalytic core and F(0) containing the membrane proton channel, linked together by a central stalk and a peripheral stalk. During catalysis, ATP synthesis in the catalytic domain of F(1) is coupled via a rotary mechanism of the central stalk subunits to proton translocation. Its function is as follows. Key component of the F(0) channel; it plays a direct role in translocation across the membrane. A homomeric c-ring of between 10-14 subunits forms the central stalk rotor element with the F(1) delta and epsilon subunits. The polypeptide is ATP synthase subunit c (Wigglesworthia glossinidia brevipalpis).